The primary structure comprises 346 residues: Uroporphyrinogen decarboxylase (346 aa).

Substrate is bound by residues 21-25 (RQAGR), D71, Y146, S201, and H316.

The protein belongs to the uroporphyrinogen decarboxylase family. In terms of assembly, homodimer.

The protein localises to the cytoplasm. The catalysed reaction is uroporphyrinogen III + 4 H(+) = coproporphyrinogen III + 4 CO2. It functions in the pathway porphyrin-containing compound metabolism; protoporphyrin-IX biosynthesis; coproporphyrinogen-III from 5-aminolevulinate: step 4/4. Catalyzes the decarboxylation of four acetate groups of uroporphyrinogen-III to yield coproporphyrinogen-III. The protein is Uroporphyrinogen decarboxylase of Rickettsia massiliae (strain Mtu5).